The primary structure comprises 912 residues: Nitrate reductase [NADH] (912 aa).

The segment at 1–99 (SVEPRQPFGR…PRDEGTADAW (99 aa)) is disordered. A compositionally biased stretch (low complexity) spans 13–23 (APATAPTARAP). Over residues 54-68 (AEEDEEDDDEDDEGH) the composition is skewed to acidic residues. Residues 85 to 94 (PSTRDPRDEG) are compositionally biased toward basic and acidic residues. Residue cysteine 186 coordinates Mo-molybdopterin. The Cytochrome b5 heme-binding domain maps to 535–610 (DKQFTMSEVR…LDTYRIGELI (76 aa)). Heme is bound by residues histidine 570 and histidine 593. The 114-residue stretch at 651–764 (REKVPCRLVD…KGPLGHVEYT (114 aa)) folds into the FAD-binding FR-type domain. FAD is bound by residues 703 to 706 (RAYT), 720 to 724 (LVKVY), phenylalanine 725, phenylalanine 732, 737 to 739 (LMT), serine 788, and threonine 791.

This sequence belongs to the nitrate reductase family. Homodimer. The cofactor is FAD. Heme is required as a cofactor. Mo-molybdopterin serves as cofactor.

The enzyme catalyses nitrite + NAD(+) + H2O = nitrate + NADH + H(+). In terms of biological role, nitrate reductase is a key enzyme involved in the first step of nitrate assimilation in plants, fungi and bacteria. The chain is Nitrate reductase [NADH] from Hordeum vulgare (Barley).